Reading from the N-terminus, the 156-residue chain is Ribosomal RNA large subunit methyltransferase H (156 aa).

Residues Leu-73, Gly-104, and 123-128 (LSPLTL) contribute to the S-adenosyl-L-methionine site.

It belongs to the RNA methyltransferase RlmH family. As to quaternary structure, homodimer.

It localises to the cytoplasm. The enzyme catalyses pseudouridine(1915) in 23S rRNA + S-adenosyl-L-methionine = N(3)-methylpseudouridine(1915) in 23S rRNA + S-adenosyl-L-homocysteine + H(+). Its function is as follows. Specifically methylates the pseudouridine at position 1915 (m3Psi1915) in 23S rRNA. The polypeptide is Ribosomal RNA large subunit methyltransferase H (Yersinia pseudotuberculosis serotype O:1b (strain IP 31758)).